A 250-amino-acid polypeptide reads, in one-letter code: Large ribosomal subunit protein uL13c (250 aa).

The transit peptide at M1–A47 directs the protein to the chloroplast.

Component of the chloroplast large ribosomal subunit (LSU). Mature 70S chloroplast ribosomes of higher plants consist of a small (30S) and a large (50S) subunit. The 30S small subunit contains 1 molecule of ribosomal RNA (16S rRNA) and 24 different proteins. The 50S large subunit contains 3 rRNA molecules (23S, 5S and 4.5S rRNA) and 33 different proteins.

The protein resides in the plastid. It is found in the chloroplast. Its function is as follows. Component of the chloroplast ribosome (chloro-ribosome), a dedicated translation machinery responsible for the synthesis of chloroplast genome-encoded proteins, including proteins of the transcription and translation machinery and components of the photosynthetic apparatus. The sequence is that of Large ribosomal subunit protein uL13c (RPL13) from Spinacia oleracea (Spinach).